The chain runs to 687 residues: Polyphosphate kinase (687 aa).

Residue N45 participates in ATP binding. Mg(2+) contacts are provided by R375 and R405. Catalysis depends on H435, which acts as the Phosphohistidine intermediate. The ATP site is built by Y472, R568, and H596.

Belongs to the polyphosphate kinase 1 (PPK1) family. Mg(2+) is required as a cofactor. Post-translationally, an intermediate of this reaction is the autophosphorylated ppk in which a phosphate is covalently linked to a histidine residue through a N-P bond.

The enzyme catalyses [phosphate](n) + ATP = [phosphate](n+1) + ADP. Its function is as follows. Catalyzes the reversible transfer of the terminal phosphate of ATP to form a long-chain polyphosphate (polyP). This chain is Polyphosphate kinase, found in Burkholderia vietnamiensis (strain G4 / LMG 22486) (Burkholderia cepacia (strain R1808)).